A 250-amino-acid polypeptide reads, in one-letter code: ATP synthase subunit a (250 aa).

6 helical membrane-spanning segments follow: residues 29–49 (ASLFMVATVACAAGFLYFATS), 84–104 (FFPMVFSLFMFVLTANLLGMM), 114–134 (IVVTFALAIFVIGTVLVYGFY), 143–163 (LFVPSGVPGALLLLVVPIEVI), 189–209 (VFAGFVASLGSLGALGVGGAL), and 216–236 (VALTGLEFLVAFLQAYVFAVL).

It belongs to the ATPase A chain family. F-type ATPases have 2 components, CF(1) - the catalytic core - and CF(0) - the membrane proton channel. CF(1) has five subunits: alpha(3), beta(3), gamma(1), delta(1), epsilon(1). CF(0) has three main subunits: a(1), b(2) and c(9-12). The alpha and beta chains form an alternating ring which encloses part of the gamma chain. CF(1) is attached to CF(0) by a central stalk formed by the gamma and epsilon chains, while a peripheral stalk is formed by the delta and b chains.

The protein resides in the cell inner membrane. Key component of the proton channel; it plays a direct role in the translocation of protons across the membrane. The chain is ATP synthase subunit a from Allorhizobium ampelinum (strain ATCC BAA-846 / DSM 112012 / S4) (Agrobacterium vitis (strain S4)).